The primary structure comprises 38 residues: CHH precursor-related peptide (38 aa).

The tract at residues Gly18 to Glu38 is disordered.

In terms of tissue distribution, produced by the medulla terminalis X-organ in the eyestalks and transported to the sinus gland where it is stored and released.

It localises to the secreted. The sequence is that of CHH precursor-related peptide from Cancer pagurus (Rock crab).